The primary structure comprises 205 residues: Large ribosomal subunit protein uL4 (205 aa).

A disordered region spans residues 45–97 (RQGTSAVKNRSAVRGGGKKPWRQKGTGRARQGSIRAPQWRGGGTVFGPTPRSY). Over residues 60-71 (GGKKPWRQKGTG) the composition is skewed to basic residues.

It belongs to the universal ribosomal protein uL4 family. Part of the 50S ribosomal subunit.

Functionally, one of the primary rRNA binding proteins, this protein initially binds near the 5'-end of the 23S rRNA. It is important during the early stages of 50S assembly. It makes multiple contacts with different domains of the 23S rRNA in the assembled 50S subunit and ribosome. Forms part of the polypeptide exit tunnel. The protein is Large ribosomal subunit protein uL4 of Lactobacillus gasseri (strain ATCC 33323 / DSM 20243 / BCRC 14619 / CIP 102991 / JCM 1131 / KCTC 3163 / NCIMB 11718 / NCTC 13722 / AM63).